The sequence spans 439 residues: Iron-sulfur cluster assembly factor IBA57 homolog, mitochondrial (439 aa).

A mitochondrion-targeting transit peptide spans 1–72 (MQPATRSIAV…RLISVSGPDA (72 aa)).

This sequence belongs to the GcvT family. CAF17/IBA57 subfamily.

It is found in the mitochondrion matrix. This Neurospora crassa (strain ATCC 24698 / 74-OR23-1A / CBS 708.71 / DSM 1257 / FGSC 987) protein is Iron-sulfur cluster assembly factor IBA57 homolog, mitochondrial (caf-17).